We begin with the raw amino-acid sequence, 207 residues long: MARYRGPKLRIVRRLGELPGLTQKNCTRDFPPGQHGPKKKGGGNQKTKESQYAVRLKEKQKLRFNYGISERQLMSYVREARKRKGSTGEILLQILEMRLDTIIFRLGFAPTIAAARQLINHGHIVVNGRRVDIPSSLCKVNDSISVALNSQNFVKNLLQSFTKTLDAPYLEVNQEKLSAVVRDNIPREAVSLQINELLVVEFYSRKV.

The disordered stretch occupies residues 22–51; sequence TQKNCTRDFPPGQHGPKKKGGGNQKTKESQ. In terms of domain architecture, S4 RNA-binding spans 97–158; that stretch reads MRLDTIIFRL…NSQNFVKNLL (62 aa).

Belongs to the universal ribosomal protein uS4 family. As to quaternary structure, part of the 30S ribosomal subunit. Contacts protein S5. The interaction surface between S4 and S5 is involved in control of translational fidelity.

The protein resides in the plastid. It localises to the chloroplast. Functionally, one of the primary rRNA binding proteins, it binds directly to 16S rRNA where it nucleates assembly of the body of the 30S subunit. Its function is as follows. With S5 and S12 plays an important role in translational accuracy. The sequence is that of Small ribosomal subunit protein uS4c (rps4) from Chlorella vulgaris (Green alga).